Here is a 609-residue protein sequence, read N- to C-terminus: Replication protein A 70 kDa DNA-binding subunit (609 aa).

Residues 112 to 164 (IGNPHPYNDGQGPPQPAAPAPASAPPPSKPQNISAPPPPSMNRGASKLFGGGS) form a disordered region. Pro residues predominate over residues 124–151 (PPQPAAPAPASAPPPSKPQNISAPPPPS). Positions 189 to 273 (WTVRARVTNK…VKNDYEMTFN (85 aa)) form a DNA-binding region, OB. The segment at 472-494 (CPSQDCNKKVIDQQNGLFRCEKC) adopts a C4-type zinc-finger fold.

It belongs to the replication factor A protein 1 family. Component of the heterotrimeric canonical replication protein A complex (RPA). Interacts with rpain-a.

Its subcellular location is the nucleus. The protein localises to the PML body. As part of the heterotrimeric replication protein A complex (RPA/RP-A), binds and stabilizes single-stranded DNA intermediates, that form during DNA replication or upon DNA stress. It prevents their reannealing and in parallel, recruits and activates different proteins and complexes involved in DNA metabolism. Thereby, it plays an essential role both in DNA replication and the cellular response to DNA damage. This chain is Replication protein A 70 kDa DNA-binding subunit (rpa1), found in Xenopus tropicalis (Western clawed frog).